The primary structure comprises 347 residues: Heat-inducible transcription repressor HrcA (347 aa).

The protein belongs to the HrcA family.

In terms of biological role, negative regulator of class I heat shock genes (grpE-dnaK-dnaJ and groELS operons). Prevents heat-shock induction of these operons. The polypeptide is Heat-inducible transcription repressor HrcA (Lactiplantibacillus plantarum (strain ATCC BAA-793 / NCIMB 8826 / WCFS1) (Lactobacillus plantarum)).